The sequence spans 222 residues: Probable elongation factor 1-beta (222 aa).

A disordered region spans residues lysine 90–glutamate 111. Positions aspartate 94–glutamate 111 are enriched in acidic residues. Serine 104 is subject to Phosphoserine.

This sequence belongs to the EF-1-beta/EF-1-delta family. In terms of assembly, EF-1 is composed of 4 subunits: alpha, beta, beta' and gamma. Phosphorylation affects the GDP/GTP exchange rate.

Its function is as follows. EF-1-beta and EF-1-delta stimulate the exchange of GDP bound to EF-1-alpha to GTP. This chain is Probable elongation factor 1-beta, found in Drosophila melanogaster (Fruit fly).